The sequence spans 269 residues: Hydroxyethylthiazole kinase (269 aa).

Methionine 45 contributes to the substrate binding site. ATP is bound by residues arginine 121 and threonine 167. A substrate-binding site is contributed by glycine 194.

The protein belongs to the Thz kinase family. Mg(2+) is required as a cofactor.

It catalyses the reaction 5-(2-hydroxyethyl)-4-methylthiazole + ATP = 4-methyl-5-(2-phosphooxyethyl)-thiazole + ADP + H(+). It participates in cofactor biosynthesis; thiamine diphosphate biosynthesis; 4-methyl-5-(2-phosphoethyl)-thiazole from 5-(2-hydroxyethyl)-4-methylthiazole: step 1/1. Catalyzes the phosphorylation of the hydroxyl group of 4-methyl-5-beta-hydroxyethylthiazole (THZ). The polypeptide is Hydroxyethylthiazole kinase (Geobacillus sp. (strain WCH70)).